Here is a 330-residue protein sequence, read N- to C-terminus: MDAAFVIATIIKILIVLGLFSALAGFGTYVERKVLAFMQRRLGPMHVGPYGLLQVLADGIKLFTKEDFIPQGAVRPVFMIAPVITAATAFIAMAAIPMFPEFTIGGYTVKPIISDINVGLLFVLGVMAAGLYGPLLAGMSSGNKWALLGAARTAIQFLSYEVVTGLSVLAPVMIVGSISLVDFNNYQAGGMGNWLIWKQPLAFVLFLIAGYAETNRTPFDLLEHEAEVISGYATEYSGMRWGMFFIGEYANMFTIGFLVSLIFLGGFNDWGFIPGAIAILIKVFFFFFLFLWTRASWPHVRPDQLMWLCWKVLMPLAVINVVITGIVMSI.

A run of 8 helical transmembrane segments spans residues 3–23 (AAFV…FSAL), 76–96 (PVFM…MAAI), 118–138 (VGLL…LLAG), 161–181 (EVVT…ISLV), 188–208 (AGGM…LFLI), 244–264 (FFIG…LIFL), 272–292 (FIPG…LFLW), and 307–327 (WLCW…TGIV).

Belongs to the complex I subunit 1 family. NDH-1 is composed of 14 different subunits. Subunits NuoA, H, J, K, L, M, N constitute the membrane sector of the complex.

The protein resides in the cell inner membrane. The catalysed reaction is a quinone + NADH + 5 H(+)(in) = a quinol + NAD(+) + 4 H(+)(out). In terms of biological role, NDH-1 shuttles electrons from NADH, via FMN and iron-sulfur (Fe-S) centers, to quinones in the respiratory chain. The immediate electron acceptor for the enzyme in this species is believed to be ubiquinone. Couples the redox reaction to proton translocation (for every two electrons transferred, four hydrogen ions are translocated across the cytoplasmic membrane), and thus conserves the redox energy in a proton gradient. This subunit may bind ubiquinone. The polypeptide is NADH-quinone oxidoreductase subunit H (Nitratiruptor sp. (strain SB155-2)).